The primary structure comprises 734 residues: Photosystem I P700 chlorophyll a apoprotein A2 (734 aa).

Helical transmembrane passes span 46-69, 135-158, 175-199, 273-291, 330-353, 369-395, 417-439, and 517-535; these read IFAS…FHVA, LYTG…LHLQ, LNHH…HVAI, MAHH…GHMY, LHFQ…QHMY, AALY…IFFI, AIIS…LYVH, and FLVH…LILV. Cys-559 and Cys-568 together coordinate [4Fe-4S] cluster. Helical transmembrane passes span 575–596 and 643–665; these read AFYL…YWHW and LSVW…MFLI. Residues His-654, Met-662, and Tyr-670 each contribute to the chlorophyll a site. Trp-671 is a binding site for phylloquinone. A helical membrane pass occupies residues 707-727; it reads LVGLAHFSVGYIFTYAAFLIA.

The protein belongs to the PsaA/PsaB family. In terms of assembly, the PsaA/B heterodimer binds the P700 chlorophyll special pair and subsequent electron acceptors. PSI consists of a core antenna complex that captures photons, and an electron transfer chain that converts photonic excitation into a charge separation. The eukaryotic PSI reaction center is composed of at least 11 subunits. It depends on P700 is a chlorophyll a/chlorophyll a' dimer, A0 is one or more chlorophyll a, A1 is one or both phylloquinones and FX is a shared 4Fe-4S iron-sulfur center. as a cofactor.

The protein localises to the plastid. It localises to the chloroplast thylakoid membrane. It catalyses the reaction reduced [plastocyanin] + hnu + oxidized [2Fe-2S]-[ferredoxin] = oxidized [plastocyanin] + reduced [2Fe-2S]-[ferredoxin]. PsaA and PsaB bind P700, the primary electron donor of photosystem I (PSI), as well as the electron acceptors A0, A1 and FX. PSI is a plastocyanin-ferredoxin oxidoreductase, converting photonic excitation into a charge separation, which transfers an electron from the donor P700 chlorophyll pair to the spectroscopically characterized acceptors A0, A1, FX, FA and FB in turn. Oxidized P700 is reduced on the lumenal side of the thylakoid membrane by plastocyanin. The chain is Photosystem I P700 chlorophyll a apoprotein A2 from Solanum tuberosum (Potato).